A 231-amino-acid polypeptide reads, in one-letter code: Octanoyltransferase (231 aa).

In terms of domain architecture, BPL/LPL catalytic spans 49–227; sequence PHLPEAVWLL…ALAARFHLAW (179 aa). Residues 91 to 98, 158 to 160, and 171 to 173 contribute to the substrate site; these read RGGEVTHH, AIG, and GLA. Cysteine 189 (acyl-thioester intermediate) is an active-site residue.

It belongs to the LipB family.

It is found in the cytoplasm. It catalyses the reaction octanoyl-[ACP] + L-lysyl-[protein] = N(6)-octanoyl-L-lysyl-[protein] + holo-[ACP] + H(+). Its pathway is protein modification; protein lipoylation via endogenous pathway; protein N(6)-(lipoyl)lysine from octanoyl-[acyl-carrier-protein]: step 1/2. Functionally, catalyzes the transfer of endogenously produced octanoic acid from octanoyl-acyl-carrier-protein onto the lipoyl domains of lipoate-dependent enzymes. Lipoyl-ACP can also act as a substrate although octanoyl-ACP is likely to be the physiological substrate. The polypeptide is Octanoyltransferase (Parasynechococcus marenigrum (strain WH8102)).